A 1372-amino-acid chain; its full sequence is DNA-directed RNA polymerase subunit beta (1372 aa).

Belongs to the RNA polymerase beta chain family. As to quaternary structure, the RNAP catalytic core consists of 2 alpha, 1 beta, 1 beta' and 1 omega subunit. When a sigma factor is associated with the core the holoenzyme is formed, which can initiate transcription.

It catalyses the reaction RNA(n) + a ribonucleoside 5'-triphosphate = RNA(n+1) + diphosphate. Functionally, DNA-dependent RNA polymerase catalyzes the transcription of DNA into RNA using the four ribonucleoside triphosphates as substrates. The protein is DNA-directed RNA polymerase subunit beta of Nitratidesulfovibrio vulgaris (strain DSM 19637 / Miyazaki F) (Desulfovibrio vulgaris).